The chain runs to 318 residues: Pantothenate kinase (318 aa).

96 to 103 is a binding site for ATP; sequence GSVAVGKS.

This sequence belongs to the prokaryotic pantothenate kinase family.

The protein resides in the cytoplasm. It carries out the reaction (R)-pantothenate + ATP = (R)-4'-phosphopantothenate + ADP + H(+). It functions in the pathway cofactor biosynthesis; coenzyme A biosynthesis; CoA from (R)-pantothenate: step 1/5. This is Pantothenate kinase from Rhodopseudomonas palustris (strain ATCC BAA-98 / CGA009).